The sequence spans 288 residues: Eukaryotic translation initiation factor 3 subunit G (288 aa).

Disordered stretches follow at residues 1-33 (MSKL…NKDG) and 156-197 (DEPT…GGER). The region spanning 208–286 (ATLRVTNVSE…LILRVEFAKR (79 aa)) is the RRM domain.

The protein belongs to the eIF-3 subunit G family. As to quaternary structure, component of the eukaryotic translation initiation factor 3 (eIF-3) complex.

Its subcellular location is the cytoplasm. Its function is as follows. RNA-binding component of the eukaryotic translation initiation factor 3 (eIF-3) complex, which is involved in protein synthesis of a specialized repertoire of mRNAs and, together with other initiation factors, stimulates binding of mRNA and methionyl-tRNAi to the 40S ribosome. The eIF-3 complex specifically targets and initiates translation of a subset of mRNAs involved in cell proliferation. This subunit can bind 18S rRNA. In Aspergillus niger (strain ATCC MYA-4892 / CBS 513.88 / FGSC A1513), this protein is Eukaryotic translation initiation factor 3 subunit G (tif35).